The following is a 256-amino-acid chain: NAP1-related protein 1 (256 aa).

A coiled-coil region spans residues 23-64 (IDAELVLSIEKLQEIQDDLEKINEKASDEVLEVEQKYNVIRK). Positions 220–256 (LTYFNNDADEEDFDGDDDGDEEGEEDDDDEEEEDGEE) are disordered. Residues 226-256 (DADEEDFDGDDDGDEEGEEDDDDEEEEDGEE) show a composition bias toward acidic residues.

This sequence belongs to the nucleosome assembly protein (NAP) family. In terms of assembly, can form homomeric and heteromeric protein complexes with NRP2. Binds histones H2A and H2B and associates with chromatin in vivo. In terms of tissue distribution, ubiquitous.

The protein localises to the cytoplasm. Its subcellular location is the nucleus. Acts as a histone H2A/H2B chaperone in nucleosome assembly, playing a critical role for the correct expression of genes involved in root proliferation and patterning. Required with NRP2 for the maintenance of cell proliferation and differentiation in postembryonic root growth. Involved in both intramolecular and intermolecular somatic homologous recombination. The sequence is that of NAP1-related protein 1 (NRP1) from Arabidopsis thaliana (Mouse-ear cress).